The primary structure comprises 306 residues: Probable cobalamin biosynthesis protein CobD (306 aa).

The next 6 membrane-spanning stretches (helical) occupy residues 17–37 (IGEPPEKVHPVIFIGKLIIFF), 54–74 (LFGFFNVILVLAIVFFMAYEI), 88–108 (ISLYSIILSFSIGHKSLIEFS), 155–175 (ITDSIIAPLIYVAIFGLPGAF), 207–227 (ILNFIPSRIAGMLLIITAPFY), and 286–306 (SLKAVDYSVLLFLIIYTVLLM).

It belongs to the CobD/CbiB family.

Its subcellular location is the cell membrane. The protein operates within cofactor biosynthesis; adenosylcobalamin biosynthesis. Functionally, converts cobyric acid to cobinamide by the addition of aminopropanol on the F carboxylic group. The chain is Probable cobalamin biosynthesis protein CobD from Methanococcus maripaludis (strain C5 / ATCC BAA-1333).